The sequence spans 360 residues: (+)-6a-hydroxymaackiain 3-O-methyltransferase 2 (360 aa).

Residues 202-205 (VAGG), D226, 226-227 (DQ), 246-247 (DM), and K260 each bind S-adenosyl-L-methionine. The active-site Proton acceptor is H264.

This sequence belongs to the class I-like SAM-binding methyltransferase superfamily. Cation-independent O-methyltransferase family. COMT subfamily.

The enzyme catalyses (+)-6a-hydroxymaackiain + S-adenosyl-L-methionine = (+)-pisatin + S-adenosyl-L-homocysteine + H(+). In terms of biological role, 3-O-methyltransferase involved in the phytoalexin pisatin biosynthesis. Can use (+)-6a-hydroxymaackiain, (+)-maackiain and with a lower activity (+)-medicarpin and 2,7,4'-trihydroxyisoflavanone as substrates, but not (-)-6a-hydroxymaackiain, daidzein, formononetin or isoliquiritigenin. The chain is (+)-6a-hydroxymaackiain 3-O-methyltransferase 2 (HMM2) from Pisum sativum (Garden pea).